The sequence spans 364 residues: Mannonate dehydratase (364 aa).

It belongs to the mannonate dehydratase family. Fe(2+) serves as cofactor. It depends on Mn(2+) as a cofactor.

It carries out the reaction D-mannonate = 2-dehydro-3-deoxy-D-gluconate + H2O. Its pathway is carbohydrate metabolism; pentose and glucuronate interconversion. Catalyzes the dehydration of D-mannonate. This is Mannonate dehydratase from Streptococcus equi subsp. zooepidemicus (strain MGCS10565).